Here is a 156-residue protein sequence, read N- to C-terminus: 6,7-dimethyl-8-ribityllumazine synthase (156 aa).

Residues Phe22, 56–58, and 80–82 contribute to the 5-amino-6-(D-ribitylamino)uracil site; these read AFE and AVI. 85-86 serves as a coordination point for (2S)-2-hydroxy-3-oxobutyl phosphate; sequence ST. The Proton donor role is filled by His88. Phe113 contacts 5-amino-6-(D-ribitylamino)uracil. Arg127 serves as a coordination point for (2S)-2-hydroxy-3-oxobutyl phosphate.

It belongs to the DMRL synthase family.

The enzyme catalyses (2S)-2-hydroxy-3-oxobutyl phosphate + 5-amino-6-(D-ribitylamino)uracil = 6,7-dimethyl-8-(1-D-ribityl)lumazine + phosphate + 2 H2O + H(+). It participates in cofactor biosynthesis; riboflavin biosynthesis; riboflavin from 2-hydroxy-3-oxobutyl phosphate and 5-amino-6-(D-ribitylamino)uracil: step 1/2. Functionally, catalyzes the formation of 6,7-dimethyl-8-ribityllumazine by condensation of 5-amino-6-(D-ribitylamino)uracil with 3,4-dihydroxy-2-butanone 4-phosphate. This is the penultimate step in the biosynthesis of riboflavin. This chain is 6,7-dimethyl-8-ribityllumazine synthase, found in Caldicellulosiruptor saccharolyticus (strain ATCC 43494 / DSM 8903 / Tp8T 6331).